The following is a 522-amino-acid chain: Amphoterin-induced protein 2 (522 aa).

Residues 1–39 form the signal peptide; sequence MSLRVHTLPTLLGAVVRPGCRELLCLLMITVAVGPGASG. The region spanning 40–68 is the LRRNT domain; that stretch reads VCPTACICATDIVSCTNKHLSKVPGNLFR. Topologically, residues 40–398 are extracellular; it reads VCPTACICAT…RSHAHEAFNT (359 aa). 2 cysteine pairs are disulfide-bonded: Cys-41-Cys-47 and Cys-45-Cys-54. LRR repeat units follow at residues 69–90, 94–115, 118–139, 142–163, 166–187, and 193–214; these read LMKR…WIPV, KLNT…SFST, NLKC…VFQE, VLEV…AFGG, QLQK…LYVG, and ELMF…HINL. N-linked (GlcNAc...) asparagine glycosylation occurs at Asn-104. Positions 228-284 constitute an LRRCT domain; that stretch reads NPFVCDCSLYSLLVFWYRRHFSSVMDFKNDYTCRLWSDSRHSRQVLLLQDSFMNCSD. 2 disulfides stabilise this stretch: Cys-232–Cys-260 and Cys-234–Cys-282. Residues Asn-281, Asn-288, Asn-345, Asn-373, Asn-381, and Asn-384 are each glycosylated (N-linked (GlcNAc...) asparagine). The Ig-like C2-type domain occupies 289 to 379; it reads GSFRALGFIH…RLLNETVDVT (91 aa). An intrachain disulfide couples Cys-310 to Cys-363. A helical transmembrane segment spans residues 399-419; that stretch reads AFTTLAACVASIVLVLLYLYL. The Cytoplasmic segment spans residues 420-522; sequence TPCPCKCKTK…FSDTPFVAST (103 aa). The segment at 501–522 is disordered; sequence RGKSDSDSVNSVFSDTPFVAST.

The protein belongs to the immunoglobulin superfamily. AMIGO family. In terms of assembly, binds itself as well as AMIGO1 and AMIGO3.

Its subcellular location is the cell membrane. It is found in the nucleus. In terms of biological role, required for depolarization-dependent survival of cultured cerebellar granule neurons. May mediate homophilic as well as heterophilic cell-cell interaction with AMIGO1 or AMIGO3. May contribute to signal transduction through its intracellular domain. This chain is Amphoterin-induced protein 2, found in Pongo abelii (Sumatran orangutan).